Here is a 192-residue protein sequence, read N- to C-terminus: Interleukin-18 (192 aa).

A propeptide spanning residues 1–35 is cleaved from the precursor; the sequence is MAAEPEDNCISFVEMKFINNTLYFVAENDEDLESD.

This sequence belongs to the IL-1 family. As to quaternary structure, forms a ternary complex with ligand-binding receptor subunit IL18R1 and signaling receptor subunit IL18RAP at the plasma membrane. Mature IL18 first binds to IL18R1 forming a low affinity binary complex, which then interacts with IL18RAP to form a high affinity ternary complex that signals inside the cell. Interacts with cargo receptor TMED10; the interaction mediates the translocation from the cytoplasm into the ERGIC (endoplasmic reticulum-Golgi intermediate compartment) and thereby secretion. The pro-IL-18 precursor is processed by CASP1, CASP4 or CASP5 to yield its mature, active form. The pro-IL-18 precursor features autoinhibitory interactions between the propeptide and the post-cleavage-site region, preventing recognition by the IL18R1 receptor. Processing by CASP1, CASP4 or CASP5 induces conformational changes to generate critical receptor-binding sites. The mature form is then secreted and released in the extracellular milieu by passing through the gasdermin-D (GSDMD) pore. In contrast, cleavage by CASP3 inactivates IL18.

The protein localises to the cytoplasm. It localises to the cytosol. It is found in the secreted. Functionally, pro-inflammatory cytokine primarily involved in epithelial barrier repair, polarized T-helper 1 (Th1) cell and natural killer (NK) cell immune responses. Upon binding to IL18R1 and IL18RAP, forms a signaling ternary complex which activates NF-kappa-B, triggering synthesis of inflammatory mediators. Synergizes with IL12/interleukin-12 to induce IFNG synthesis from T-helper 1 (Th1) cells and natural killer (NK) cells. Involved in transduction of inflammation downstream of pyroptosis: its mature form is specifically released in the extracellular milieu by passing through the gasdermin-D (GSDMD) pore. The chain is Interleukin-18 (IL18) from Sus scrofa (Pig).